The chain runs to 314 residues: Malate dehydrogenase (314 aa).

Residues Gly13–Gly18 and Asp37 contribute to the NAD(+) site. Residues Arg88 and Arg94 each coordinate substrate. NAD(+)-binding positions include Asn101 and Val124 to Asn126. Residues Asn126 and Arg157 each coordinate substrate. His181 functions as the Proton acceptor in the catalytic mechanism.

The protein belongs to the LDH/MDH superfamily. MDH type 3 family.

The enzyme catalyses (S)-malate + NAD(+) = oxaloacetate + NADH + H(+). Its function is as follows. Catalyzes the reversible oxidation of malate to oxaloacetate. The sequence is that of Malate dehydrogenase from Myxococcus xanthus.